The sequence spans 238 residues: MGRSFEVRKASMAKTAGAKIKVYSKYGKEIYMCAKNGGSDPDMNLSLKHLIAKAKKDQVPAHVIEKALDKANGGGGEDYVPARYEGFGPGGTSVIVDCLTDNGNRTFQDVRQCFVKVGAKIGVEGSVSHMFDHQAVFQFKGEDDEVILETLMMEDVDVTDVELEDGVITVFAPHTEFFKTKTALNAAFPDLTIDVEEITFVPQTQTPVAGEDAEKFQKFLDLLDDCDDVQQVYHNAEL.

This sequence belongs to the TACO1 family.

Its subcellular location is the cytoplasm. This is Probable transcriptional regulatory protein VPA0011 from Vibrio parahaemolyticus serotype O3:K6 (strain RIMD 2210633).